A 312-amino-acid chain; its full sequence is HTH-type transcriptional regulator PtxR (312 aa).

The HTH lysR-type domain maps to 11-68 (LNLNHLYAFVAVAEHNSFTAAAEALGLSKSLLSEQLRRLEADLGIQLLTRTTRRMTLT). The H-T-H motif DNA-binding region spans 28–47 (FTAAAEALGLSKSLLSEQLR).

Belongs to the LysR transcriptional regulatory family. As to quaternary structure, monomer in solution. May dimerize on binding to DNA. Interacts with PtxS in the absence of 2-ketogluconate. Binding of the 2-ketogluconate effector to PtxS causes PtxS/PtxR complex dissociation.

Its activity is regulated as follows. Negatively regulated by PtxS, which interacts with PtxR and prevents its activity. In terms of biological role, plays an important role in the regulation of the production of the virulence factor exotoxin A (toxA), via positive regulation of the transcription of the toxA gene. Acts by binding directly to the toxA promoter region. Besides toxA, PtxR modulates the expression of genes that code for the QS-controlled virulence factors. It negatively regulates the expression of the rhamnolipid and pyocyanine genes, through the autoinducer synthase RhlI, and the PQS synthesis operon pqsABCDE, while it positively regulates the expression of lasB through the autoinducer synthase LasI. Also positively regulates the expression of the exotoxin A regulatory protein (toxR or regA). In addition, is involved in the positive regulation of glucose metabolism via the regulation of the expression of the kgu and gad operons. Acts by binding directly to the promoter region of the kgu and gad operons. This is HTH-type transcriptional regulator PtxR from Pseudomonas aeruginosa (strain ATCC 15692 / DSM 22644 / CIP 104116 / JCM 14847 / LMG 12228 / 1C / PRS 101 / PAO1).